The sequence spans 547 residues: Probable ABC transporter periplasmic-binding protein SapA (547 aa).

The first 21 residues, 1-21 (MRQVLSSLLVIAGLVSGQAIA), serve as a signal peptide directing secretion.

The protein belongs to the bacterial solute-binding protein 5 family.

The protein localises to the periplasm. Not part of a putrescine export system. Very similar to a S.typhimurium protein implicated in antimicrobial peptide resistance, but the SapBCDF operon in E.coli is implicated in putrescine export. The protein is Probable ABC transporter periplasmic-binding protein SapA (sapA) of Escherichia coli (strain K12).